The primary structure comprises 212 residues: Thymidylate kinase (212 aa).

10–17 (GPEGAGKT) contacts ATP.

It belongs to the thymidylate kinase family.

It carries out the reaction dTMP + ATP = dTDP + ADP. Functionally, phosphorylation of dTMP to form dTDP in both de novo and salvage pathways of dTTP synthesis. This Bacillus licheniformis (strain ATCC 14580 / DSM 13 / JCM 2505 / CCUG 7422 / NBRC 12200 / NCIMB 9375 / NCTC 10341 / NRRL NRS-1264 / Gibson 46) protein is Thymidylate kinase.